A 237-amino-acid polypeptide reads, in one-letter code: Segregation and condensation protein A (237 aa).

The protein belongs to the ScpA family. As to quaternary structure, component of a cohesin-like complex composed of ScpA, ScpB and the Smc homodimer, in which ScpA and ScpB bind to the head domain of Smc. The presence of the three proteins is required for the association of the complex with DNA.

It is found in the cytoplasm. Participates in chromosomal partition during cell division. May act via the formation of a condensin-like complex containing Smc and ScpB that pull DNA away from mid-cell into both cell halves. The chain is Segregation and condensation protein A from Streptococcus thermophilus (strain CNRZ 1066).